The following is a 185-amino-acid chain: Hypoxanthine/guanine phosphoribosyltransferase (185 aa).

This sequence belongs to the purine/pyrimidine phosphoribosyltransferase family. Archaeal HPRT subfamily. Homodimer.

It is found in the cytoplasm. It carries out the reaction IMP + diphosphate = hypoxanthine + 5-phospho-alpha-D-ribose 1-diphosphate. The catalysed reaction is GMP + diphosphate = guanine + 5-phospho-alpha-D-ribose 1-diphosphate. It functions in the pathway purine metabolism; IMP biosynthesis via salvage pathway; IMP from hypoxanthine: step 1/1. Its function is as follows. Catalyzes a salvage reaction resulting in the formation of IMP that is energically less costly than de novo synthesis. The polypeptide is Hypoxanthine/guanine phosphoribosyltransferase (Methanococcus vannielii (strain ATCC 35089 / DSM 1224 / JCM 13029 / OCM 148 / SB)).